Here is a 506-residue protein sequence, read N- to C-terminus: Protein MGF 505-9R (506 aa).

ANK repeat units lie at residues 54-83 (PTHK…SLQY), 253-283 (QVDT…ETVE), and 313-343 (FVKK…KINL).

It belongs to the asfivirus MGF 505 family.

In terms of biological role, plays a role in virus cell tropism, and may be required for efficient virus replication in macrophages. The protein is Protein MGF 505-9R of Ornithodoros (relapsing fever ticks).